The primary structure comprises 460 residues: Chromosomal replication initiator protein DnaA (460 aa).

The domain I, interacts with DnaA modulators stretch occupies residues M1–H73. The tract at residues H73–T116 is domain II. The tract at residues E117–I333 is domain III, AAA+ region. ATP-binding residues include G161, G163, K164, and T165. The interval S334 to L460 is domain IV, binds dsDNA.

The protein belongs to the DnaA family. In terms of assembly, oligomerizes as a right-handed, spiral filament on DNA at oriC.

Its subcellular location is the cytoplasm. Plays an essential role in the initiation and regulation of chromosomal replication. ATP-DnaA binds to the origin of replication (oriC) to initiate formation of the DNA replication initiation complex once per cell cycle. Binds the DnaA box (a 9 base pair repeat at the origin) and separates the double-stranded (ds)DNA. Forms a right-handed helical filament on oriC DNA; dsDNA binds to the exterior of the filament while single-stranded (ss)DNA is stabiized in the filament's interior. The ATP-DnaA-oriC complex binds and stabilizes one strand of the AT-rich DNA unwinding element (DUE), permitting loading of DNA polymerase. After initiation quickly degrades to an ADP-DnaA complex that is not apt for DNA replication. Binds acidic phospholipids. The chain is Chromosomal replication initiator protein DnaA from Trichormus variabilis (strain ATCC 29413 / PCC 7937) (Anabaena variabilis).